The sequence spans 365 residues: Dual-specificity RNA methyltransferase RlmN (365 aa).

E91 serves as the catalytic Proton acceptor. The 241-residue stretch at 97–337 (ETSRGTLCIS…TTVRKTRGDD (241 aa)) folds into the Radical SAM core domain. The cysteines at positions 104 and 342 are disulfide-linked. Residues C111, C115, and C118 each coordinate [4Fe-4S] cluster. S-adenosyl-L-methionine-binding positions include 168 to 169 (GE), S200, 222 to 224 (SLH), and N299. Catalysis depends on C342, which acts as the S-methylcysteine intermediate.

This sequence belongs to the radical SAM superfamily. RlmN family. [4Fe-4S] cluster serves as cofactor.

The protein localises to the cytoplasm. The enzyme catalyses adenosine(2503) in 23S rRNA + 2 reduced [2Fe-2S]-[ferredoxin] + 2 S-adenosyl-L-methionine = 2-methyladenosine(2503) in 23S rRNA + 5'-deoxyadenosine + L-methionine + 2 oxidized [2Fe-2S]-[ferredoxin] + S-adenosyl-L-homocysteine. It catalyses the reaction adenosine(37) in tRNA + 2 reduced [2Fe-2S]-[ferredoxin] + 2 S-adenosyl-L-methionine = 2-methyladenosine(37) in tRNA + 5'-deoxyadenosine + L-methionine + 2 oxidized [2Fe-2S]-[ferredoxin] + S-adenosyl-L-homocysteine. Its function is as follows. Specifically methylates position 2 of adenine 2503 in 23S rRNA and position 2 of adenine 37 in tRNAs. m2A2503 modification seems to play a crucial role in the proofreading step occurring at the peptidyl transferase center and thus would serve to optimize ribosomal fidelity. This chain is Dual-specificity RNA methyltransferase RlmN, found in Nitrosospira multiformis (strain ATCC 25196 / NCIMB 11849 / C 71).